Here is a 649-residue protein sequence, read N- to C-terminus: 1-deoxy-D-xylulose-5-phosphate synthase (649 aa).

Thiamine diphosphate-binding positions include His-84 and 125-127; that span reads GHS. Asp-156 contributes to the Mg(2+) binding site. Thiamine diphosphate is bound by residues 157–158, Asn-185, Phe-292, and Glu-385; that span reads GS. Mg(2+) is bound at residue Asn-185.

The protein belongs to the transketolase family. DXPS subfamily. As to quaternary structure, homodimer. The cofactor is Mg(2+). It depends on thiamine diphosphate as a cofactor.

The enzyme catalyses D-glyceraldehyde 3-phosphate + pyruvate + H(+) = 1-deoxy-D-xylulose 5-phosphate + CO2. It participates in metabolic intermediate biosynthesis; 1-deoxy-D-xylulose 5-phosphate biosynthesis; 1-deoxy-D-xylulose 5-phosphate from D-glyceraldehyde 3-phosphate and pyruvate: step 1/1. Functionally, catalyzes the acyloin condensation reaction between C atoms 2 and 3 of pyruvate and glyceraldehyde 3-phosphate to yield 1-deoxy-D-xylulose-5-phosphate (DXP). In Saccharophagus degradans (strain 2-40 / ATCC 43961 / DSM 17024), this protein is 1-deoxy-D-xylulose-5-phosphate synthase.